A 383-amino-acid chain; its full sequence is Glucose-1-phosphate adenylyltransferase (383 aa).

Alpha-D-glucose 1-phosphate is bound by residues Tyr99, Gly164, 179–180, and Ser190; that span reads EK.

It belongs to the bacterial/plant glucose-1-phosphate adenylyltransferase family. Homotetramer.

The enzyme catalyses alpha-D-glucose 1-phosphate + ATP + H(+) = ADP-alpha-D-glucose + diphosphate. Its pathway is glycan biosynthesis; glycogen biosynthesis. Its function is as follows. Involved in the biosynthesis of ADP-glucose, a building block required for the elongation reactions to produce glycogen. Catalyzes the reaction between ATP and alpha-D-glucose 1-phosphate (G1P) to produce pyrophosphate and ADP-Glc. The polypeptide is Glucose-1-phosphate adenylyltransferase (Halalkalibacterium halodurans (strain ATCC BAA-125 / DSM 18197 / FERM 7344 / JCM 9153 / C-125) (Bacillus halodurans)).